Consider the following 271-residue polypeptide: Phosphate import ATP-binding protein PstB 2 (271 aa).

The interval 1–20 (MLTKKPEINTILQTTPDPHS) is disordered. Residues 25 to 266 (MATEDLHVYY…PQEKQTEDYI (242 aa)) form the ABC transporter domain. 57-64 (GPSGCGKS) contacts ATP.

Belongs to the ABC transporter superfamily. Phosphate importer (TC 3.A.1.7) family. The complex is composed of two ATP-binding proteins (PstB), two transmembrane proteins (PstC and PstA) and a solute-binding protein (PstS).

It is found in the cell membrane. It carries out the reaction phosphate(out) + ATP + H2O = ADP + 2 phosphate(in) + H(+). Its function is as follows. Part of the ABC transporter complex PstSACB involved in phosphate import. Responsible for energy coupling to the transport system. The chain is Phosphate import ATP-binding protein PstB 2 from Listeria innocua serovar 6a (strain ATCC BAA-680 / CLIP 11262).